Consider the following 104-residue polypeptide: NADH-ubiquinone oxidoreductase 12 kDa subunit, mitochondrial (104 aa).

Belongs to the complex I NDUFS6 subunit family. As to quaternary structure, complex I is composed of about 40 different subunits.

It is found in the mitochondrion inner membrane. Its function is as follows. Accessory subunit of the mitochondrial membrane respiratory chain NADH dehydrogenase (Complex I), that is believed not to be involved in catalysis. Complex I functions in the transfer of electrons from NADH to the respiratory chain. The immediate electron acceptor for the enzyme is believed to be ubiquinone. In Neurospora crassa (strain ATCC 24698 / 74-OR23-1A / CBS 708.71 / DSM 1257 / FGSC 987), this protein is NADH-ubiquinone oxidoreductase 12 kDa subunit, mitochondrial (nuo-12.3).